We begin with the raw amino-acid sequence, 713 residues long: Elongation factor G (713 aa).

In terms of domain architecture, tr-type G spans 8–290 (ERYRNFGIMA…GVIQLLPSPV (283 aa)). Residues 17–24 (AHIDAGKT), 88–92 (DTPGH), and 142–145 (NKMD) contribute to the GTP site.

This sequence belongs to the TRAFAC class translation factor GTPase superfamily. Classic translation factor GTPase family. EF-G/EF-2 subfamily.

It localises to the cytoplasm. Its function is as follows. Catalyzes the GTP-dependent ribosomal translocation step during translation elongation. During this step, the ribosome changes from the pre-translocational (PRE) to the post-translocational (POST) state as the newly formed A-site-bound peptidyl-tRNA and P-site-bound deacylated tRNA move to the P and E sites, respectively. Catalyzes the coordinated movement of the two tRNA molecules, the mRNA and conformational changes in the ribosome. The protein is Elongation factor G of Stenotrophomonas maltophilia (strain K279a).